The sequence spans 159 residues: MRIGHGFDVHAFGGEGPIIIGGVRIPYEKGLLAHSDGDVALHALTDALLGAAALGDIGKLFPDTDPAFKGADSRELLREAWRRIQAKGYTLGNVDVTIIAQAPKMLPHIPQMRVFIAEDLGCHMDEVNVKATTTEKLGFTGRGEGIACEAVALLMKAAK.

Positions 8 and 10 each coordinate a divalent metal cation. 4-CDP-2-C-methyl-D-erythritol 2-phosphate-binding positions include 8 to 10 (DVH) and 34 to 35 (HS). Residue His-42 coordinates a divalent metal cation. Residues 56-58 (DIG), 61-65 (FPDTD), 100-106 (AQAPKML), 132-135 (TTTE), Phe-139, and Arg-142 each bind 4-CDP-2-C-methyl-D-erythritol 2-phosphate.

It belongs to the IspF family. Homotrimer. Requires a divalent metal cation as cofactor.

The catalysed reaction is 4-CDP-2-C-methyl-D-erythritol 2-phosphate = 2-C-methyl-D-erythritol 2,4-cyclic diphosphate + CMP. The protein operates within isoprenoid biosynthesis; isopentenyl diphosphate biosynthesis via DXP pathway; isopentenyl diphosphate from 1-deoxy-D-xylulose 5-phosphate: step 4/6. In terms of biological role, involved in the biosynthesis of isopentenyl diphosphate (IPP) and dimethylallyl diphosphate (DMAPP), two major building blocks of isoprenoid compounds. Catalyzes the conversion of 4-diphosphocytidyl-2-C-methyl-D-erythritol 2-phosphate (CDP-ME2P) to 2-C-methyl-D-erythritol 2,4-cyclodiphosphate (ME-CPP) with a corresponding release of cytidine 5-monophosphate (CMP). In Salmonella typhimurium (strain LT2 / SGSC1412 / ATCC 700720), this protein is 2-C-methyl-D-erythritol 2,4-cyclodiphosphate synthase.